Consider the following 715-residue polypeptide: Probable serine/threonine-protein kinase mkcE (715 aa).

3 disordered regions span residues 1 to 125, 228 to 330, and 366 to 385; these read MQKI…SQHQ, QLQQ…TTTT, and GVDN…PIQP. Residues 42 to 53 show a composition bias toward gly residues; the sequence is YDGGGSGSGSGG. 2 stretches are compositionally biased toward low complexity: residues 54–70 and 80–125; these read SSSN…TGGN and SPSN…SQHQ. A coiled-coil region spans residues 207–241; that stretch reads TGKKNFQQQQLQQLQQQQQQQQLQQQQHQQHNHQI. The span at 367 to 378 shows a compositional bias: low complexity; the sequence is VDNLSSTTTSLS. A Protein kinase domain is found at 427 to 683; the sequence is RIGENAEVKG…PTQLLQHPFI (257 aa). ATP-binding positions include 433–441 and K459; that span reads EVKGAFGTV. D550 functions as the Proton acceptor in the catalytic mechanism.

It belongs to the protein kinase superfamily. STE Ser/Thr protein kinase family. STE20 subfamily. Requires Mg(2+) as cofactor.

It carries out the reaction L-seryl-[protein] + ATP = O-phospho-L-seryl-[protein] + ADP + H(+). The catalysed reaction is L-threonyl-[protein] + ATP = O-phospho-L-threonyl-[protein] + ADP + H(+). In Dictyostelium discoideum (Social amoeba), this protein is Probable serine/threonine-protein kinase mkcE.